A 1081-amino-acid chain; its full sequence is WD repeat-containing protein 64 (1081 aa).

14 WD repeats span residues aspartate 102–lysine 152, glycine 153–glutamine 198, glutamate 199–serine 265, lysine 266–asparagine 314, leucine 315–threonine 356, lysine 357–leucine 400, leucine 401–isoleucine 444, glutamine 445–leucine 488, glutamine 489–glycine 532, glutamine 533–glutamate 631, arginine 632–serine 740, lysine 741–leucine 803, leucine 804–phenylalanine 857, and lysine 858–histidine 895. Over residues cysteine 726–glutamine 745 the composition is skewed to low complexity. The tract at residues cysteine 726 to threonine 757 is disordered. The segment covering serine 746–glutamine 756 has biased composition (basic and acidic residues). The interval aspartate 1036–serine 1060 is disordered. The segment covering glycine 1043–serine 1060 has biased composition (basic residues).

The protein is WD repeat-containing protein 64 (WDR64) of Homo sapiens (Human).